We begin with the raw amino-acid sequence, 303 residues long: Small ribosomal subunit protein uS2 (303 aa).

The disordered stretch occupies residues 258-303; sequence ATLRENAVVTENEVKKTDEEEGASSEAARADAQNEEAVAKPGEEVE. The segment covering 294 to 303 has biased composition (basic and acidic residues); that stretch reads AVAKPGEEVE.

It belongs to the universal ribosomal protein uS2 family.

The polypeptide is Small ribosomal subunit protein uS2 (Bifidobacterium animalis subsp. lactis (strain AD011)).